A 311-amino-acid polypeptide reads, in one-letter code: Nuclear hormone receptor family member nhr-111 (311 aa).

The segment at residues 39 to 115 (ITLCAVCGDT…KGMNKNAVQP (77 aa)) is a DNA-binding region (nuclear receptor). 2 consecutive NR C4-type zinc fingers follow at residues 42–62 (CAVCGDTSNGNHYGVPTCFGC) and 78–98 (CWNGDGNCVIDKANRNRCKSC). The NR LBD domain maps to 116–311 (ERTSHSYTVE…KACEIVISFL (196 aa)).

The protein belongs to the nuclear hormone receptor family.

It localises to the nucleus. Its function is as follows. Orphan nuclear receptor. In Caenorhabditis elegans, this protein is Nuclear hormone receptor family member nhr-111 (nhr-111).